The chain runs to 500 residues: uncharacterized protein (500 aa).

Residues M1 to I13 show a composition bias toward low complexity. Residues M1–R23 form a disordered region. Residue S9 is modified to Phosphoserine. Transmembrane regions (helical) follow at residues V87–L107, L126–A146, L156–C176, W183–Y203, M225–A245, V261–F281, F312–Q332, G351–L371, I380–A400, V408–I428, I445–I465, and V471–M491.

The protein belongs to the major facilitator superfamily.

It localises to the golgi apparatus. It is found in the membrane. This is an uncharacterized protein from Schizosaccharomyces pombe (strain 972 / ATCC 24843) (Fission yeast).